We begin with the raw amino-acid sequence, 317 residues long: L-lactate dehydrogenase (317 aa).

Residues V17, D38, K43, Y68, and 82 to 83 each bind NAD(+); that span reads GV. Substrate is bound at residue R91. Residues S104, 121-123, and S146 each bind NAD(+); that span reads VSN. A substrate-binding site is contributed by 123–126; sequence NPVD. 151-154 is a substrate binding site; that stretch reads DTSR. Beta-D-fructose 1,6-bisphosphate is bound by residues K156 and H171. H178 (proton acceptor) is an active-site residue. Phosphotyrosine is present on Y224. T233 provides a ligand contact to substrate.

It belongs to the LDH/MDH superfamily. LDH family. In terms of assembly, homotetramer.

The protein localises to the cytoplasm. It catalyses the reaction (S)-lactate + NAD(+) = pyruvate + NADH + H(+). The protein operates within fermentation; pyruvate fermentation to lactate; (S)-lactate from pyruvate: step 1/1. Its activity is regulated as follows. Allosterically activated by fructose 1,6-bisphosphate (FBP). Functionally, catalyzes the conversion of lactate to pyruvate. The protein is L-lactate dehydrogenase of Clostridium perfringens (strain SM101 / Type A).